Here is a 260-residue protein sequence, read N- to C-terminus: Hydroxyethylthiazole kinase (260 aa).

M36 contacts substrate. 2 residues coordinate ATP: R112 and T157. G184 contributes to the substrate binding site.

Belongs to the Thz kinase family. The cofactor is Mg(2+).

It catalyses the reaction 5-(2-hydroxyethyl)-4-methylthiazole + ATP = 4-methyl-5-(2-phosphooxyethyl)-thiazole + ADP + H(+). The protein operates within cofactor biosynthesis; thiamine diphosphate biosynthesis; 4-methyl-5-(2-phosphoethyl)-thiazole from 5-(2-hydroxyethyl)-4-methylthiazole: step 1/1. In terms of biological role, catalyzes the phosphorylation of the hydroxyl group of 4-methyl-5-beta-hydroxyethylthiazole (THZ). The sequence is that of Hydroxyethylthiazole kinase from Shouchella clausii (strain KSM-K16) (Alkalihalobacillus clausii).